The chain runs to 455 residues: Rho GTPase-activating protein 3 (455 aa).

The segment covering M1–T12 has biased composition (polar residues). The disordered stretch occupies residues M1–G68. Basic and acidic residues predominate over residues G24–N33. Low complexity predominate over residues S43–T54. Polar residues predominate over residues P55 to G64. One can recognise a CRIB domain in the interval I105–T118. Residues K153–E331 enclose the Rho-GAP domain. 2 disordered regions span residues K342–N366 and F432–W455. Over residues N435 to W446 the composition is skewed to basic and acidic residues.

In terms of tissue distribution, expressed in differentiating xylem cells.

It is found in the cell membrane. In terms of biological role, acts as a GTPase activator for the Rac-type GTPase by converting it to an inactive GDP-bound state. Involved in secondary wall pattern formation. In association with ROPGEF4, mediates local activation of ARAC10/ROP11 to initiate the distinct pattern of secondary cell walls in xylem cells. This Arabidopsis thaliana (Mouse-ear cress) protein is Rho GTPase-activating protein 3 (ROPGAP3).